The following is an 876-amino-acid chain: Alanine--tRNA ligase (876 aa).

K74 is modified (N6-acetyllysine). 4 residues coordinate Zn(2+): H564, H568, C666, and H670.

The protein belongs to the class-II aminoacyl-tRNA synthetase family. As to quaternary structure, homotetramer. It depends on Zn(2+) as a cofactor.

It is found in the cytoplasm. The enzyme catalyses tRNA(Ala) + L-alanine + ATP = L-alanyl-tRNA(Ala) + AMP + diphosphate. Functionally, catalyzes the attachment of alanine to tRNA(Ala) in a two-step reaction: alanine is first activated by ATP to form Ala-AMP and then transferred to the acceptor end of tRNA(Ala). Also edits incorrectly charged Ser-tRNA(Ala) and Gly-tRNA(Ala) via its editing domain. The protein is Alanine--tRNA ligase of Escherichia coli (strain ATCC 8739 / DSM 1576 / NBRC 3972 / NCIMB 8545 / WDCM 00012 / Crooks).